Consider the following 92-residue polypeptide: Putative pterin-4-alpha-carbinolamine dehydratase (92 aa).

This sequence belongs to the pterin-4-alpha-carbinolamine dehydratase family.

It carries out the reaction (4aS,6R)-4a-hydroxy-L-erythro-5,6,7,8-tetrahydrobiopterin = (6R)-L-erythro-6,7-dihydrobiopterin + H2O. In Cereibacter sphaeroides (strain ATCC 17023 / DSM 158 / JCM 6121 / CCUG 31486 / LMG 2827 / NBRC 12203 / NCIMB 8253 / ATH 2.4.1.) (Rhodobacter sphaeroides), this protein is Putative pterin-4-alpha-carbinolamine dehydratase.